Consider the following 180-residue polypeptide: Translation initiation factor IF-3 (180 aa).

Belongs to the IF-3 family. As to quaternary structure, monomer.

The protein resides in the cytoplasm. IF-3 binds to the 30S ribosomal subunit and shifts the equilibrium between 70S ribosomes and their 50S and 30S subunits in favor of the free subunits, thus enhancing the availability of 30S subunits on which protein synthesis initiation begins. In Klebsiella pneumoniae, this protein is Translation initiation factor IF-3.